The chain runs to 392 residues: MKFVDEATILVVAGDGGNGCVSFRREKYIPRGGPDGGDGGDGGDVWLEADENLNTLIDYRFEKSFRAERGQNGQSRDCTGKRGKDVTVKVPVGTRVIDQGTGETLGDMTKHGQRLMVGKGGWHGLGNSRFKSSVNRSPRQKTMGTPGDKRDLQLELMLLADVGMLGMPNAGKSTFIRSVSAAKPKVADYPFTTLVPSLGVVRMDNEKSFVVADIPGLIEGAAEGAGLGIRFLKHLERCRVLLHLIDIDPIDGSDPVENARIIVGELEKYSDKLAAKPRWLVFNKIDLMDKAEAEAKAKAIAEAMGWEDKYYLISAASQMGVKDLCWDVMAFIIENPITQAEEAKQPEKVEFMWDDYHRQQLEEQEVEVEDDEEWDEDWDEDDEEGVEFIYKR.

The Obg domain maps to 1–159; it reads MKFVDEATIL…RDLQLELMLL (159 aa). The tract at residues 127–148 is disordered; it reads NSRFKSSVNRSPRQKTMGTPGD. Positions 129–143 are enriched in polar residues; that stretch reads RFKSSVNRSPRQKTM. The OBG-type G domain occupies 160–333; that stretch reads ADVGMLGMPN…LCWDVMAFII (174 aa). Residues 166 to 173, 191 to 195, 213 to 216, 283 to 286, and 314 to 316 each bind GTP; these read GMPNAGKS, FTTLV, DIPG, NKID, and SAA. 2 residues coordinate Mg(2+): Ser173 and Thr193. Positions 363 to 386 are enriched in acidic residues; that stretch reads EQEVEVEDDEEWDEDWDEDDEEGV. A disordered region spans residues 363–392; the sequence is EQEVEVEDDEEWDEDWDEDDEEGVEFIYKR.

It belongs to the TRAFAC class OBG-HflX-like GTPase superfamily. OBG GTPase family. In terms of assembly, monomer. The cofactor is Mg(2+).

It localises to the cytoplasm. Its function is as follows. An essential GTPase which binds GTP, GDP and possibly (p)ppGpp with moderate affinity, with high nucleotide exchange rates and a fairly low GTP hydrolysis rate. Plays a role in control of the cell cycle, stress response, ribosome biogenesis and in those bacteria that undergo differentiation, in morphogenesis control. The sequence is that of GTPase Obg from Enterobacter sp. (strain 638).